A 228-amino-acid polypeptide reads, in one-letter code: MIPSKNIQKIKLVTFDAFGTILHLSKPVPIVYSEVAQKYGVHATIDEIEHNSNKAFKDFSEKHKNHGKKSGLNPHDWWIKVIEHSFPTPVPAEMAEELWSYFSKKTGYTIHPLLIDFLKRNKEERKYIIGIISNTDERIRTVLEDYGIDHLIDIYAFSYDVGFEKPSREIFDYAMEKAVKLLGQEIQPEECMHLGDDLIKDVSAARNIQWNAEYCDIKTNFLKYFEQK.

It belongs to the HAD-like hydrolase superfamily.

Its subcellular location is the cytoplasm. It localises to the nucleus. This is an uncharacterized protein from Schizosaccharomyces pombe (strain 972 / ATCC 24843) (Fission yeast).